The chain runs to 360 residues: Nucleoporin SEH1-B (360 aa).

WD repeat units lie at residues 10-49, 55-96, 111-152, 160-210, 217-258, and 276-315; these read DHKDLIHDVSFDFHGRRMATCSSDQSVKVWDKSENVNWHC, THSG…SNDK, DSRT…NLSQ, SCKL…RKYA, SVSD…KELS, and NHNSQVWRVSWNITGTVLASSGDDGTVRLWKANYMDNWKC.

It belongs to the WD repeat SEC13 family. As to quaternary structure, component of the Nup107-160 subcomplex of the nuclear pore complex (NPC). The Nup107-160 subcomplex includes NUP160, NUP133, NUP107, NUP98, NUP85, NUP43, NUP37, SEH1 and SEC13. Component of the GATOR2 subcomplex, composed of MIOS, SEC13, SEH1L, WDR24 and WDR59. The GATOR2 complex interacts with CASTOR1 and CASTOR2; the interaction is negatively regulated by arginine. The GATOR2 complex interacts with SESN1, SESN2 and SESN3; the interaction is negatively regulated by amino acids.

Its subcellular location is the chromosome. The protein resides in the centromere. It localises to the kinetochore. It is found in the nucleus. The protein localises to the nuclear pore complex. Its subcellular location is the lysosome membrane. Its activity is regulated as follows. The GATOR2 complex is negatively regulated by the upstream amino acid sensors CASTOR1 and SESN2, which sequester the GATOR2 complex in absence of amino acids. In the presence of abundant amino acids, GATOR2 is released from CASTOR1 and SESN2 and activated. In terms of biological role, component of the Nup107-160 subcomplex of the nuclear pore complex (NPC). The Nup107-160 subcomplex is required for the assembly of a functional NPC. The Nup107-160 subcomplex is also required for normal kinetochore microtubule attachment, mitotic progression and chromosome segregation. This subunit plays a role in recruitment of the Nup107-160 subcomplex to the kinetochore. Functionally, as a component of the GATOR2 complex, functions as an activator of the amino acid-sensing branch of the mTORC1 signaling pathway. The GATOR2 complex indirectly activates mTORC1 through the inhibition of the GATOR1 subcomplex. GATOR2 probably acts as an E3 ubiquitin-protein ligase toward GATOR1. In the presence of abundant amino acids, the GATOR2 complex mediates ubiquitination of the NPRL2 core component of the GATOR1 complex, leading to GATOR1 inactivation. In the absence of amino acids, GATOR2 is inhibited, activating the GATOR1 complex. The chain is Nucleoporin SEH1-B (seh1l-b) from Xenopus laevis (African clawed frog).